A 440-amino-acid polypeptide reads, in one-letter code: Glutamyl-tRNA reductase (440 aa).

Substrate contacts are provided by residues 47–50 (TCNR), Ser110, 115–117 (ERE), and Gln121. Residue Cys48 is the Nucleophile of the active site. Residue 192 to 197 (GTGAYA) coordinates NADP(+).

The protein belongs to the glutamyl-tRNA reductase family. Homodimer.

It catalyses the reaction (S)-4-amino-5-oxopentanoate + tRNA(Glu) + NADP(+) = L-glutamyl-tRNA(Glu) + NADPH + H(+). Its pathway is porphyrin-containing compound metabolism; protoporphyrin-IX biosynthesis; 5-aminolevulinate from L-glutamyl-tRNA(Glu): step 1/2. In terms of biological role, catalyzes the NADPH-dependent reduction of glutamyl-tRNA(Glu) to glutamate 1-semialdehyde (GSA). The polypeptide is Glutamyl-tRNA reductase (Paenarthrobacter aurescens (strain TC1)).